We begin with the raw amino-acid sequence, 530 residues long: Laccase-2 (530 aa).

An N-terminal signal peptide occupies residues 1-23; sequence MLLSSAFVGSCLAILNFAAAVSA. Plastocyanin-like domains are found at residues 36-154 and 167-311; these read NKVI…YDPE and TTII…RYTN. N82 carries N-linked (GlcNAc...) asparagine glycosylation. H88 and H90 together coordinate Cu cation. Disulfide bonds link C109/C520 and C141/C228. N-linked (GlcNAc...) asparagine glycosylation occurs at N120. Cu cation contacts are provided by H133 and H135. N191, N240, N292, N311, N366, N375, N392, and N412 each carry an N-linked (GlcNAc...) asparagine glycan. Residues 379–504 form the Plastocyanin-like 3 domain; sequence YVNPTVPVLL…FAVVLAEAPQ (126 aa). Positions 428, 431, 433, 484, 485, 486, and 490 each coordinate Cu cation.

The protein belongs to the multicopper oxidase family. Requires Cu cation as cofactor.

Its subcellular location is the secreted. It catalyses the reaction 4 hydroquinone + O2 = 4 benzosemiquinone + 2 H2O. With respect to regulation, inhibited by chloride ions. Inhibited by citrate. Inhibited by oxalate. Activated by acetate. In vitro, has activity towards 2,2'-azino-bis(3-ethylbenzthiazoline-6-sulfonic acid) (ABTS), 2,6-dimethoxy-phenol, and guaiacol. Although brown rot fungi preferentially degrade hemicellulose and cellulose, the enzyme may contribute to generating small amounts of lignin breakdown products required for catalytic reactions. This chain is Laccase-2, found in Fomitopsis schrenkii (Brown rot fungus).